Consider the following 419-residue polypeptide: Probable glycosidase C21B10.07 (419 aa).

2 disordered regions span residues 1 to 20 and 29 to 67; these read MGIP…AALS and DPAR…NNEN. The span at 30–59 shows a compositional bias: basic and acidic residues; it reads PARKNESTNDVIDNHTDTEIDDHDNDHENL. Residues 88-108 traverse the membrane as a helical segment; that stretch reads FIWILIFIVALICSVLIGVLG. Residues 122–387 enclose the GH16 domain; sequence PSYKAKTYSL…WAGSSVYSSA (266 aa). Catalysis depends on glutamate 237, which acts as the Nucleophile. The active-site Proton donor is glutamate 242.

Belongs to the glycosyl hydrolase 16 family.

It is found in the membrane. The sequence is that of Probable glycosidase C21B10.07 from Schizosaccharomyces pombe (strain 972 / ATCC 24843) (Fission yeast).